The sequence spans 206 residues: Uridine kinase (206 aa).

11–18 (GGSGSGKT) is a binding site for ATP.

It belongs to the uridine kinase family.

Its subcellular location is the cytoplasm. It catalyses the reaction uridine + ATP = UMP + ADP + H(+). The enzyme catalyses cytidine + ATP = CMP + ADP + H(+). Its pathway is pyrimidine metabolism; CTP biosynthesis via salvage pathway; CTP from cytidine: step 1/3. It functions in the pathway pyrimidine metabolism; UMP biosynthesis via salvage pathway; UMP from uridine: step 1/1. The chain is Uridine kinase from Macrococcus caseolyticus (strain JCSC5402) (Macrococcoides caseolyticum).